Here is a 324-residue protein sequence, read N- to C-terminus: Beta-ketoacyl-[acyl-carrier-protein] synthase III (324 aa).

Catalysis depends on residues Cys112 and His251. The interval 252 to 256 (QANLR) is ACP-binding. Asn281 is an active-site residue.

It belongs to the thiolase-like superfamily. FabH family. As to quaternary structure, homodimer.

The protein localises to the cytoplasm. It catalyses the reaction malonyl-[ACP] + acetyl-CoA + H(+) = 3-oxobutanoyl-[ACP] + CO2 + CoA. Its pathway is lipid metabolism; fatty acid biosynthesis. Catalyzes the condensation reaction of fatty acid synthesis by the addition to an acyl acceptor of two carbons from malonyl-ACP. Catalyzes the first condensation reaction which initiates fatty acid synthesis and may therefore play a role in governing the total rate of fatty acid production. Possesses both acetoacetyl-ACP synthase and acetyl transacylase activities. Its substrate specificity determines the biosynthesis of branched-chain and/or straight-chain of fatty acids. This Clostridium perfringens (strain 13 / Type A) protein is Beta-ketoacyl-[acyl-carrier-protein] synthase III.